We begin with the raw amino-acid sequence, 854 residues long: Aryl hydrocarbon receptor (854 aa).

Residues 1–9 constitute a propeptide that is removed on maturation; the sequence is MSSGANITY. Positions 1-38 are disordered; that stretch reads MSSGANITYASRKRRKPVQKTVKPIPAEGIKSNPSKRH. Short sequence motifs (nuclear localization signal) lie at residues 12-15 and 36-41; these read RKRR and KRHRDR. A bHLH domain is found at 26–79; the sequence is PAEGIKSNPSKRHRDRLNTELDRLASLLPFPQDVINKLDKLSVLRLSVSYLRAK. The segment at 37-65 is DNA-binding; it reads RHRDRLNTELDRLASLLPFPQDVINKLDK. Required for maintaining the overall integrity of the AHR:ARNT heterodimer and its transcriptional activity regions lie at residues 49–81, 116–124, and 264–266; these read LASL…AKSF, LLQALNGFV, and FAI. The Nuclear export signal motif lies at 63–71; sequence LDKLSVLRL. Residues 111–175 enclose the PAS 1 domain; that stretch reads QEGEFLLQAL…AEFQRQLHWA (65 aa). The PAS 2 domain maps to 270–340; sequence LQPPSILEIR…CAESHIRMIK (71 aa). Residues 346–387 enclose the PAC domain; that stretch reads MTVFRLLAKHSRWRWVQSNARLIYRNGRPDYIIATQRPLTDE. The interval 425-452 is disordered; the sequence is LPIRTKSNTSRKDWAPQSTPSKDSFHPS. Over residues 440–452 the composition is skewed to polar residues; it reads PQSTPSKDSFHPS.

In terms of assembly, homodimer. Heterodimer; efficient DNA binding requires dimerization with another bHLH protein. Interacts with ARNT; the heterodimer ARNT:AHR binds to core DNA sequence 5'-TGCGTG-3' within the dioxin response element (DRE) of target gene promoters and activates their transcription. Binds MYBBP1A. Interacts with coactivators including SRC-1, RIP140 and NOCA7, and with the corepressor SMRT. Interacts with NEDD8 and IVNS1ABP. Interacts with BMAL1. Interacts with HSP90AB1. Interacts with TIPARP; leading to mono-ADP-ribosylation of AHR and subsequent inhibition of AHR. Post-translationally, mono-ADP-ribosylated, leading to inhibit transcription activator activity of AHR.

The protein localises to the cytoplasm. The protein resides in the nucleus. Ligand-activated transcription factor that enables cells to adapt to changing conditions by sensing compounds from the environment, diet, microbiome and cellular metabolism, and which plays important roles in development, immunity and cancer. Upon ligand binding, translocates into the nucleus, where it heterodimerizes with ARNT and induces transcription by binding to xenobiotic response elements (XRE). Regulates a variety of biological processes, including angiogenesis, hematopoiesis, drug and lipid metabolism, cell motility and immune modulation. Xenobiotics can act as ligands: upon xenobiotic-binding, activates the expression of multiple phase I and II xenobiotic chemical metabolizing enzyme genes (such as the CYP1A1 gene). Mediates biochemical and toxic effects of halogenated aromatic hydrocarbons. Next to xenobiotics, natural ligands derived from plants, microbiota, and endogenous metabolism are potent AHR agonists. Tryptophan (Trp) derivatives constitute an important class of endogenous AHR ligands. Acts as a negative regulator of anti-tumor immunity: indoles and kynurenic acid generated by Trp catabolism act as ligand and activate AHR, thereby promoting AHR-driven cancer cell motility and suppressing adaptive immunity. Regulates the circadian clock by inhibiting the basal and circadian expression of the core circadian component PER1. Inhibits PER1 by repressing the CLOCK-BMAL1 heterodimer mediated transcriptional activation of PER1. The heterodimer ARNT:AHR binds to core DNA sequence 5'-TGCGTG-3' within the dioxin response element (DRE) of target gene promoters and activates their transcription. The chain is Aryl hydrocarbon receptor (Ahr) from Mus spretus (Western Mediterranean mouse).